A 49-amino-acid chain; its full sequence is Glycolactin (49 aa).

This sequence belongs to the pancreatic ribonuclease family. Post-translationally, glycosylated. In terms of tissue distribution, milk.

It localises to the secreted. Manifests poly C-specific RNase activity toward yeast tRNA, elicits a dose-dependent inhibition of cell-free translation, inhibits formation of superoxide ions in vitro and inhibits the hemagglutinating activities of soybean lectin and Ricinus communis agglutinin 120. Inhibits HIV-1 reverse transcriptase. The sequence is that of Glycolactin from Bos taurus (Bovine).